A 408-amino-acid chain; its full sequence is Histidine--tRNA ligase (408 aa).

The protein belongs to the class-II aminoacyl-tRNA synthetase family. Homodimer.

Its subcellular location is the cytoplasm. It catalyses the reaction tRNA(His) + L-histidine + ATP = L-histidyl-tRNA(His) + AMP + diphosphate + H(+). This is Histidine--tRNA ligase from Campylobacter jejuni subsp. jejuni serotype O:6 (strain 81116 / NCTC 11828).